Reading from the N-terminus, the 213-residue chain is Urease accessory protein UreE (213 aa).

The segment at 170–213 is disordered; sequence EHHGRSHSHSHSHSHDHDHDHDHDHDHDHQHGPSCSHGHGHGHR. Residues 182-200 are compositionally biased toward basic and acidic residues; it reads HSHDHDHDHDHDHDHDHQH.

The protein belongs to the UreE family.

Its subcellular location is the cytoplasm. In terms of biological role, involved in urease metallocenter assembly. Binds nickel. Probably functions as a nickel donor during metallocenter assembly. The protein is Urease accessory protein UreE of Burkholderia thailandensis (strain ATCC 700388 / DSM 13276 / CCUG 48851 / CIP 106301 / E264).